A 110-amino-acid chain; its full sequence is METIAKHRHARSSAQKVRLVADLIRGKKVSQALDILTYTNKKAAVLVKKVLESAIANAEHNDGADIDDLKVTKIFVDEGPSMKRIMPRAKGRADRILKRTSHITVVVSDR.

It belongs to the universal ribosomal protein uL22 family. Part of the 50S ribosomal subunit.

Its function is as follows. This protein binds specifically to 23S rRNA; its binding is stimulated by other ribosomal proteins, e.g. L4, L17, and L20. It is important during the early stages of 50S assembly. It makes multiple contacts with different domains of the 23S rRNA in the assembled 50S subunit and ribosome. Functionally, the globular domain of the protein is located near the polypeptide exit tunnel on the outside of the subunit, while an extended beta-hairpin is found that lines the wall of the exit tunnel in the center of the 70S ribosome. The protein is Large ribosomal subunit protein uL22 of Citrobacter koseri (strain ATCC BAA-895 / CDC 4225-83 / SGSC4696).